The sequence spans 203 residues: Putative GPI-anchored protein YHR214W (203 aa).

The N-terminal stretch at M1–G23 is a signal peptide. N28 and N138 each carry an N-linked (GlcNAc...) asparagine glycan. Residue N184 is the site of GPI-anchor amidated asparagine attachment. Residues A185 to L203 constitute a propeptide, removed in mature form.

Its subcellular location is the cell membrane. The polypeptide is Putative GPI-anchored protein YHR214W (Saccharomyces cerevisiae (strain ATCC 204508 / S288c) (Baker's yeast)).